We begin with the raw amino-acid sequence, 1171 residues long: 7,8-linoleate diol synthase (1171 aa).

The span at 1–22 (MASSSSSGSSTRSSSPSDPPSS) shows a compositional bias: low complexity. The interval 1 to 56 (MASSSSSGSSTRSSSPSDPPSSFFQKLGAFLGLFSKPQPPRPDYPHAPGNSAREEQ) is disordered. Residues 114-457 (TDGLITGLWE…DGSFEDEGLI (344 aa)) are fatty acid alpha-dioxygenase. Heme b is bound at residue His213. Positions 214, 229, 231, 233, and 235 each coordinate Ca(2+). Tyr385 is an active-site residue. His388 contributes to the heme b binding site. The segment at 675-1171 (KILNNQKDFK…PMNMKIRWDD (497 aa)) is epoxy alcohol synthase. The tract at residues 873-900 (GLANGGANGHANGNANGHTNGNGIHQNG) is disordered. A compositionally biased stretch (low complexity) spans 881–895 (GHANGNANGHTNGNG). Cys1089 is a heme binding site.

It in the N-terminal section; belongs to the peroxidase family. The protein in the C-terminal section; belongs to the cytochrome P450 family. Homotetramer. Requires heme b as cofactor. Ca(2+) serves as cofactor. It depends on heme as a cofactor.

The catalysed reaction is (9Z,12Z)-octadecadienoate + O2 = (8R,9Z,12Z)-8-hydroperoxyoctadeca-9,12-dienoate. The enzyme catalyses (8R,9Z,12Z)-8-hydroperoxyoctadeca-9,12-dienoate = (7S,8S,9Z,12Z)-7,8-dihydroxyoctadeca-9,12-dienoate. Its function is as follows. 7,8-linoleate diol synthase is a bifunctional enzyme that converts linoleic acid (18:2n-6) into 8-hydroperoxy-8(E),12(Z)-octadecadienoic acid (8-HPODE) and then catalyzes the isomerization of the resulting hydroperoxide to 7,8-dihydroxy-9(Z),12(Z)-octadecadienoic acid (7,8-DiHODE). This is 7,8-linoleate diol synthase from Pyricularia oryzae (strain 70-15 / ATCC MYA-4617 / FGSC 8958) (Rice blast fungus).